Reading from the N-terminus, the 375-residue chain is Chaperone protein DnaJ (375 aa).

One can recognise a J domain in the interval 5–69; that stretch reads DYYEVLGVSK…QKRAQYDQFG (65 aa). Residues 132–214 form a CR-type zinc finger; that stretch reads GKETIIEIPR…CGGTGKVKKR (83 aa). Residues cysteine 145, cysteine 148, cysteine 162, cysteine 165, cysteine 188, cysteine 191, cysteine 202, and cysteine 205 each coordinate Zn(2+). CXXCXGXG motif repeat units follow at residues 145–152, 162–169, 188–195, and 202–209; these read CETCKGSG, CSHCGGSG, CHHCEGTG, and CSDCGGTG.

This sequence belongs to the DnaJ family. As to quaternary structure, homodimer. The cofactor is Zn(2+).

The protein localises to the cytoplasm. In terms of biological role, participates actively in the response to hyperosmotic and heat shock by preventing the aggregation of stress-denatured proteins and by disaggregating proteins, also in an autonomous, DnaK-independent fashion. Unfolded proteins bind initially to DnaJ; upon interaction with the DnaJ-bound protein, DnaK hydrolyzes its bound ATP, resulting in the formation of a stable complex. GrpE releases ADP from DnaK; ATP binding to DnaK triggers the release of the substrate protein, thus completing the reaction cycle. Several rounds of ATP-dependent interactions between DnaJ, DnaK and GrpE are required for fully efficient folding. Also involved, together with DnaK and GrpE, in the DNA replication of plasmids through activation of initiation proteins. The chain is Chaperone protein DnaJ from Bacillus velezensis (strain DSM 23117 / BGSC 10A6 / LMG 26770 / FZB42) (Bacillus amyloliquefaciens subsp. plantarum).